Here is a 740-residue protein sequence, read N- to C-terminus: Homeobox protein 4 (740 aa).

A compositionally biased stretch (polar residues) spans 1–13; that stretch reads MNTVEENNTKITD. 2 disordered regions span residues 1–41 and 179–491; these read MNTV…ENLS and NNNN…NNEI. Composition is skewed to low complexity over residues 14–34, 179–241, 251–288, and 303–316; these read NNNN…NNKN, NNNN…PQQN, NNNN…NNNN, and STTD…SVPS. A coiled-coil region spans residues 254–287; that stretch reads NINNNNINKNNNNYNNNNNNKNNNNNNNNNNNNN. Residues 317–328 are compositionally biased toward basic residues; that stretch reads NKKKSSKTKQKS. The segment covering 339–363 has biased composition (polar residues); sequence HKSNYHQQPNQNSQHLQSKPNSPIL. Low complexity-rich tracts occupy residues 365–390 and 397–491; these read SSPL…SPPQ and NNNF…NNEI. Positions 472 to 500 form a coiled coil; sequence NTNTNNNNNKNNNNNNNNEIENNNNEELI. The segment at residues 605–667 is a DNA-binding region (homeobox); it reads RPKKGAKLSK…NTRRRKVPTL (63 aa). Low complexity predominate over residues 686–722; that stretch reads NNNNNNGGNSNFKNNNNNTITTTSTSNNNNNNNNNNH. The disordered stretch occupies residues 686 to 740; that stretch reads NNNNNNGGNSNFKNNNNNTITTTSTSNNNNNNNNNNHNEMECDDGENEESSEYDD. A compositionally biased stretch (acidic residues) spans 726–740; that stretch reads ECDDGENEESSEYDD.

Its subcellular location is the nucleus. Functionally, putative transcription factor. This Dictyostelium discoideum (Social amoeba) protein is Homeobox protein 4 (hbx4).